The following is a 504-amino-acid chain: Acid phosphatase A (504 aa).

Residues Met1–Ala22 form the signal peptide. 7 N-linked (GlcNAc...) asparagine glycosylation sites follow: Asn84, Asn112, Asn168, Asn260, Asn415, Asn450, and Asn474.

The protein belongs to the metallophosphoesterase superfamily. Purple acid phosphatase family. Monomer.

It localises to the secreted. The catalysed reaction is a phosphate monoester + H2O = an alcohol + phosphate. Its function is as follows. Acid phosphatase involved in the regulation of fungal phenotypic traits and virulence in C.parasitica. In Cryphonectria parasitica (strain ATCC 38755 / EP155), this protein is Acid phosphatase A.